A 382-amino-acid chain; its full sequence is D-alanine--D-alanine ligase (382 aa).

The 212-residue stretch at K161–Y372 folds into the ATP-grasp domain. Residue V193 to E248 coordinates ATP. D326, E339, and N341 together coordinate Mg(2+).

Belongs to the D-alanine--D-alanine ligase family. Requires Mg(2+) as cofactor. Mn(2+) serves as cofactor.

Its subcellular location is the cytoplasm. The enzyme catalyses 2 D-alanine + ATP = D-alanyl-D-alanine + ADP + phosphate + H(+). It functions in the pathway cell wall biogenesis; peptidoglycan biosynthesis. In terms of biological role, cell wall formation. The protein is D-alanine--D-alanine ligase of Arthrobacter sp. (strain FB24).